The primary structure comprises 123 residues: Unclassified hydrophobin 9 (123 aa).

Positions 1–24 are cleaved as a signal peptide; the sequence is MFFFNTKPIVFLVVLSVVATFAAA. Intrachain disulfides connect Cys37/Cys103, Cys45/Cys97, Cys46/Cys88, and Cys104/Cys117.

This sequence belongs to the fungal hydrophobin family. As to quaternary structure, self-assembles to form functional amyloid fibrils called rodlets. Self-assembly into fibrillar rodlets occurs spontaneously at hydrophobic:hydrophilic interfaces and the rodlets further associate laterally to form amphipathic monolayers.

Its subcellular location is the secreted. It is found in the cell wall. Its function is as follows. Aerial growth, conidiation, and dispersal of filamentous fungi in the environment rely upon a capability of their secreting small amphipathic proteins called hydrophobins (HPBs) with low sequence identity. Class I can self-assemble into an outermost layer of rodlet bundles on aerial cell surfaces, conferring cellular hydrophobicity that supports fungal growth, development and dispersal; whereas Class II form highly ordered films at water-air interfaces through intermolecular interactions but contribute nothing to the rodlet structure. The sequence is that of Unclassified hydrophobin 9 from Pleurotus ostreatus (strain PC15) (Oyster mushroom).